A 156-amino-acid polypeptide reads, in one-letter code: Arginine repressor (156 aa).

The protein belongs to the ArgR family.

The protein resides in the cytoplasm. It functions in the pathway amino-acid biosynthesis; L-arginine biosynthesis [regulation]. Its function is as follows. Regulates arginine biosynthesis genes. In Edwardsiella ictaluri (strain 93-146), this protein is Arginine repressor.